The following is a 375-amino-acid chain: Chaperone protein DnaJ (375 aa).

The region spanning 5 to 70 (DYYEILGVSK…QKRAAYDQYG (66 aa)) is the J domain. Residues 130 to 208 (GVTKEIRIPT…CHGHGRVEKS (79 aa)) form a CR-type zinc finger. C143, C146, C160, C163, C182, C185, C196, and C199 together coordinate Zn(2+). CXXCXGXG motif repeat units lie at residues 143–150 (CDVCHGSG), 160–167 (CPTCHGSG), 182–189 (CPHCQGRG), and 196–203 (CHKCHGHG).

This sequence belongs to the DnaJ family. Homodimer. Zn(2+) is required as a cofactor.

It is found in the cytoplasm. Its function is as follows. Participates actively in the response to hyperosmotic and heat shock by preventing the aggregation of stress-denatured proteins and by disaggregating proteins, also in an autonomous, DnaK-independent fashion. Unfolded proteins bind initially to DnaJ; upon interaction with the DnaJ-bound protein, DnaK hydrolyzes its bound ATP, resulting in the formation of a stable complex. GrpE releases ADP from DnaK; ATP binding to DnaK triggers the release of the substrate protein, thus completing the reaction cycle. Several rounds of ATP-dependent interactions between DnaJ, DnaK and GrpE are required for fully efficient folding. Also involved, together with DnaK and GrpE, in the DNA replication of plasmids through activation of initiation proteins. The protein is Chaperone protein DnaJ of Salmonella paratyphi A (strain ATCC 9150 / SARB42).